A 379-amino-acid polypeptide reads, in one-letter code: uncharacterized protein (379 aa).

3 disordered regions span residues 1–25 (MASD…EKGK), 128–158 (QGKT…IERT), and 355–379 (TEKT…QGDI). A compositionally biased stretch (polar residues) spans 128–141 (QGKTTSATTSNSTI).

This is an uncharacterized protein from Caenorhabditis elegans.